The chain runs to 297 residues: Probable endonuclease 4 (297 aa).

9 residues coordinate Zn(2+): His-69, His-110, Glu-145, Asp-179, His-182, His-214, Asp-227, His-229, and Glu-259.

It belongs to the AP endonuclease 2 family. Zn(2+) serves as cofactor.

It carries out the reaction Endonucleolytic cleavage to 5'-phosphooligonucleotide end-products.. In terms of biological role, endonuclease IV plays a role in DNA repair. It cleaves phosphodiester bonds at apurinic or apyrimidinic (AP) sites, generating a 3'-hydroxyl group and a 5'-terminal sugar phosphate. This chain is Probable endonuclease 4, found in Oceanobacillus iheyensis (strain DSM 14371 / CIP 107618 / JCM 11309 / KCTC 3954 / HTE831).